Here is a 177-residue protein sequence, read N- to C-terminus: MIGSFLTRGLLMVFGYAYPAYECFKTVELNKPEIQQLQFWCQYWIIVAALTIFERIGDALVSWLPMYSEAKLAFFIYLWFPKTKGTTYVYDSFFRPYIAKHENEIDRNLVKVKTRAKDMAMIYLQKAINQGQTKFFEILQYITEQSTPKSKAEEKKETTIPKLDDPILKVKENEVTK.

The interval 145 to 165 is disordered; that stretch reads QSTPKSKAEEKKETTIPKLDD. Residues 150 to 165 show a composition bias toward basic and acidic residues; the sequence is SKAEEKKETTIPKLDD.

Belongs to the DP1 family.

This is Putative HVA22-like protein g (HVA22G) from Arabidopsis thaliana (Mouse-ear cress).